The following is a 210-amino-acid chain: Urease accessory protein UreF (210 aa).

This sequence belongs to the UreF family. In terms of assembly, ureD, UreF and UreG form a complex that acts as a GTP-hydrolysis-dependent molecular chaperone, activating the urease apoprotein by helping to assemble the nickel containing metallocenter of UreC. The UreE protein probably delivers the nickel.

Its subcellular location is the cytoplasm. Required for maturation of urease via the functional incorporation of the urease nickel metallocenter. The sequence is that of Urease accessory protein UreF from Cereibacter sphaeroides (strain ATCC 17023 / DSM 158 / JCM 6121 / CCUG 31486 / LMG 2827 / NBRC 12203 / NCIMB 8253 / ATH 2.4.1.) (Rhodobacter sphaeroides).